Consider the following 280-residue polypeptide: MTTLTRRGRRADVGQENRVDSEDYIKDKDEEESADSKDIRLTLMEEVLLLGLKDKEGYTSFWNDCISSGLRGGILIELFLRNRVVLEPSTLRKKRLTDRKVLLKSDTPTGDVLLDETLKHMKATEPAETVQSWIELLTGETWNPFKLQYQLRNVRERIAKNLVEKGILTTEKQNFLLFDMTTHPVSNTTEKQRLVKKLQESLLEKWVNDPHRMDRRTLALLVLAHSSDVLENAFSSLSDEKYDMAMTRSKELLDLDPDTEGNKPNTCEMIWAVLSAFNKS.

Residues Met-1 to Glu-30 are disordered. A compositionally biased stretch (basic and acidic residues) spans Arg-10–Glu-30. Residues Trp-62, Arg-71, Arg-152, and Arg-155 each contribute to the a 1,2-diacyl-sn-glycero-3-phospho-(1D-myo-inositol 4-phosphate) site. Residues Glu-171–Thr-182 are beta-hairpin required for oligomerization.

It belongs to the GOLPH3/VPS74 family. Homooligomer.

The protein resides in the golgi apparatus. It is found in the golgi stack membrane. The protein localises to the trans-Golgi network membrane. Phosphatidylinositol-4-phosphate-binding protein that may play a role in the process of vesicle budding at the Golgi and anterograde transport to the plasma membrane. The protein is Golgi phosphoprotein 3-like (golph3l) of Xenopus tropicalis (Western clawed frog).